A 221-amino-acid polypeptide reads, in one-letter code: Interleukin-12 subunit alpha (221 aa).

A signal peptide spans 1–25; that stretch reads MCPLRSLLLISTLVLLHHLPHLSLG. 3 disulfide bridges follow: cysteine 39/cysteine 112, cysteine 66/cysteine 198, and cysteine 87/cysteine 125. The N-linked (GlcNAc...) asparagine glycan is linked to asparagine 95.

This sequence belongs to the IL-6 superfamily. Heterodimer with IL12B; disulfide-linked. This heterodimer is known as interleukin IL-12. Heterodimer with EBI3/IL27B; not disulfide-linked. This heterodimer is known as interleukin IL-35. Interacts with NBR1; this interaction promotes IL-12 secretion.

Its subcellular location is the secreted. In terms of biological role, heterodimerizes with IL12B to form the IL-12 cytokine or with EBI3/IL27B to form the IL-35 cytokine. IL-12 is primarily produced by professional antigen-presenting cells (APCs) such as B-cells and dendritic cells (DCs) as well as macrophages and granulocytes and regulates T-cell and natural killer-cell responses, induces the production of interferon-gamma (IFN-gamma), favors the differentiation of T-helper 1 (Th1) cells and is an important link between innate resistance and adaptive immunity. Mechanistically, exerts its biological effects through a receptor composed of IL12R1 and IL12R2 subunits. Binding to the receptor results in the rapid tyrosine phosphorylation of a number of cellular substrates including the JAK family kinases TYK2 and JAK2. In turn, recruited STAT4 gets phosphorylated and translocates to the nucleus where it regulates cytokine/growth factor responsive genes. As part of IL-35, plays essential roles in maintaining the immune homeostasis of the liver microenvironment and also functions as an immune-suppressive cytokine. Mediates biological events through unconventional receptors composed of IL12RB2 and gp130/IL6ST heterodimers or homodimers. Signaling requires the transcription factors STAT1 and STAT4, which form a unique heterodimer that binds to distinct DNA sites. This chain is Interleukin-12 subunit alpha (IL12A), found in Bos taurus (Bovine).